We begin with the raw amino-acid sequence, 1281 residues long: Zinc finger transcription factor Trps1 (1281 aa).

Disordered stretches follow at residues methionine 1 to proline 101 and proline 116 to leucine 204. Polar residues-rich tracts occupy residues leucine 21 to serine 31 and aspartate 40 to serine 49. Residue lysine 29 forms a Glycyl lysine isopeptide (Lys-Gly) (interchain with G-Cter in SUMO2) linkage. Residues serine 90 and serine 127 each carry the phosphoserine modification. A compositionally biased stretch (basic and acidic residues) spans leucine 148 to glutamate 162. Residues proline 166–valine 189 are compositionally biased toward polar residues. 2 positions are modified to phosphoserine: serine 178 and serine 216. The C2H2-type 1; atypical zinc-finger motif lies at phenylalanine 222–histidine 247. A Glycyl lysine isopeptide (Lys-Gly) (interchain with G-Cter in SUMO2) cross-link involves residue lysine 263. The segment at phenylalanine 333–histidine 358 adopts a C2H2-type 2; atypical zinc-finger fold. Positions serine 365–aspartate 393 are disordered. Residues lysine 418, lysine 457, lysine 474, and lysine 488 each participate in a glycyl lysine isopeptide (Lys-Gly) (interchain with G-Cter in SUMO2) cross-link. A disordered region spans residues asparagine 484–alanine 515. Basic and acidic residues predominate over residues lysine 488–alanine 515. A C2H2-type 3; atypical zinc finger spans residues histidine 614–histidine 637. The interval threonine 635–serine 819 is mediates interaction with GLI3. Residue lysine 645 forms a Glycyl lysine isopeptide (Lys-Gly) (interchain with G-Cter in SUMO2) linkage. 2 C2H2-type zinc fingers span residues histidine 666 to histidine 689 and tyrosine 692 to histidine 715. Glycyl lysine isopeptide (Lys-Gly) (interchain with G-Cter in SUMO2) cross-links involve residues lysine 737 and lysine 755. A Glycyl lysine isopeptide (Lys-Gly) (interchain with G-Cter in SUMO1); alternate cross-link involves residue lysine 766. A Glycyl lysine isopeptide (Lys-Gly) (interchain with G-Cter in SUMO2); alternate cross-link involves residue lysine 766. Glycyl lysine isopeptide (Lys-Gly) (interchain with G-Cter in SUMO2) cross-links involve residues lysine 825 and lysine 850. The segment at alanine 856–leucine 885 is disordered. Residues lysine 862–proline 871 show a composition bias toward polar residues. Residues lysine 877 and lysine 879 each participate in a glycyl lysine isopeptide (Lys-Gly) (interchain with G-Cter in SUMO2) cross-link. Residues cysteine 896–cysteine 920 form a GATA-type zinc finger. Residues lysine 925, lysine 937, and lysine 965 each participate in a glycyl lysine isopeptide (Lys-Gly) (interchain with G-Cter in SUMO2) cross-link. A compositionally biased stretch (polar residues) spans glutamate 961 to glycine 977. The tract at residues glutamate 961 to serine 1000 is disordered. Serine 978 is modified (phosphoserine). A compositionally biased stretch (basic and acidic residues) spans leucine 980–glutamate 995. Positions glutamate 985 to lysine 1184 are mediates interaction with RNF4. Glycyl lysine isopeptide (Lys-Gly) (interchain with G-Cter in SUMO2) cross-links involve residues lysine 1003, lysine 1012, lysine 1030, and lysine 1040. A compositionally biased stretch (polar residues) spans lysine 1040 to proline 1049. The tract at residues lysine 1040–proline 1078 is disordered. A Phosphoserine modification is found at serine 1041. Over residues glycine 1050 to lysine 1059 the composition is skewed to low complexity. The span at glycine 1060–methionine 1072 shows a compositional bias: basic and acidic residues. At serine 1066 the chain carries Phosphoserine. Lysine 1070 participates in a covalent cross-link: Glycyl lysine isopeptide (Lys-Gly) (interchain with G-Cter in SUMO2). Serine 1085 is subject to Phosphoserine. Residues proline 1163 to glutamate 1281 form a transcriptional repressor domain region. A disordered region spans residues lysine 1169–aspartate 1195. Glycyl lysine isopeptide (Lys-Gly) (interchain with G-Cter in SUMO2); alternate cross-links involve residues lysine 1192 and lysine 1201. Residues lysine 1192 and lysine 1201 each participate in a glycyl lysine isopeptide (Lys-Gly) (interchain with G-Cter in SUMO); alternate cross-link. Lysine 1201 is covalently cross-linked (Glycyl lysine isopeptide (Lys-Gly) (interchain with G-Cter in SUMO1); alternate). 2 consecutive C2H2-type zinc fingers follow at residues threonine 1215–histidine 1237 and phenylalanine 1243–histidine 1267.

As to quaternary structure, interacts with RNF4; regulates TRPS1 repressor activity. Interacts specifically with the activator form of GLI3 (GLI3A) but not with the repressor form (GLI3R). In terms of processing, sumoylated. Sumoylation in the repressor domain inhibits the transcription repression activity. Sumoylation on Lys-1201 is the major site. Appears to be sumoylated on multiple sites. In terms of tissue distribution, in the embryo, expression is detected in both visceral and skeletal tissues. Found in the maxilla, mandible, snout, prospective phalanges and in the femoral head within the developing hip. Also expressed in the hair follicles.

The protein resides in the nucleus. In terms of biological role, transcriptional repressor. Binds specifically to GATA sequences and represses expression of GATA-regulated genes at selected sites and stages in vertebrate development. Regulates chondrocyte proliferation and differentiation. Executes multiple functions in proliferating chondrocytes, expanding the region of distal chondrocytes, activating proliferation in columnar cells and supporting the differentiation of columnar into hypertrophic chondrocytes. In Mus musculus (Mouse), this protein is Zinc finger transcription factor Trps1 (Trps1).